Reading from the N-terminus, the 132-residue chain is Small ribosomal subunit protein uS9 (132 aa).

The segment at 104-132 (GYLTRDPRMKERKKYGLRKARRAPQFSKR) is disordered. Basic residues predominate over residues 113 to 132 (KERKKYGLRKARRAPQFSKR).

Belongs to the universal ribosomal protein uS9 family.

The polypeptide is Small ribosomal subunit protein uS9 (Natranaerobius thermophilus (strain ATCC BAA-1301 / DSM 18059 / JW/NM-WN-LF)).